The primary structure comprises 296 residues: MAFKYHKVAIVGKHYKKEVSQMVETLYAYLQQQGLEIIIENDTAADTSLVNVAIASLKEIALRCDVAIVVGGDGNFLKASRLLALYSNIPVIGINKGKLGFLTTLAADDNALKNDLYAILKGDSSVTKMSMLKYRVDNNLRAPLEASIALNEIAITASRGLMFGLKVFIDGRYAFDQRGDGLIVSTPTGSTAHAMSAGGPILNPNQNSVVLVPICSHSLNSRPLVISDESVIDIYITDYNDPEPVLSIDGRHDTILKAHQKVTIQKARKKVTVLHTKDYNYYDTLREKLGWSKVLF.

Aspartate 73 serves as the catalytic Proton acceptor. NAD(+)-binding positions include 73-74 (DG), lysine 78, 151-152 (NE), arginine 178, aspartate 180, and 191-196 (TAHAMS).

Belongs to the NAD kinase family. A divalent metal cation is required as a cofactor.

It localises to the cytoplasm. The enzyme catalyses NAD(+) + ATP = ADP + NADP(+) + H(+). Involved in the regulation of the intracellular balance of NAD and NADP, and is a key enzyme in the biosynthesis of NADP. Catalyzes specifically the phosphorylation on 2'-hydroxyl of the adenosine moiety of NAD to yield NADP. The protein is NAD kinase of Francisella tularensis subsp. mediasiatica (strain FSC147).